Here is a 1344-residue protein sequence, read N- to C-terminus: Centrosomal P4.1-associated protein (1344 aa).

Disordered regions lie at residues 67–123 (SSEE…NNDL) and 187–225 (PGTL…ASNV). Polar residues predominate over residues 211 to 225 (SYSNPTQENSCASNV). Residue Ser248 is modified to Phosphoserine. The tract at residues 257–300 (QEAHVKRNDLKEESPAHPSGEGALPRWEKKMGRSQEGKDVNLQK) is disordered. Composition is skewed to basic and acidic residues over residues 259–271 (AHVK…EESP) and 282–297 (RWEK…KDVN). Ser304 is modified (phosphoserine). Residues 307–382 (VVNIDERPIK…FTNAKSKFQK (76 aa)) are alpha/beta-tubulin binding. 2 disordered regions span residues 347-407 (QEAE…DRQH) and 425-470 (TVKK…KKRD). The span at 388–398 (LASTQSPSEDQ) shows a compositional bias: polar residues. Ser528 carries the post-translational modification Phosphoserine. 2 positions are modified to phosphoserine; by PLK2: Ser577 and Ser583. 2 disordered regions span residues 600–626 (RLSS…SNCS) and 672–735 (TSEI…DTGA). Positions 709-720 (VGDRVFSNREDS) are enriched in basic and acidic residues. Ser748 is subject to Phosphoserine. Residues 887–1344 (QPPEFMVCFI…DGNVLMDTEM (458 aa)) form an interaction with STIL region. The disordered stretch occupies residues 1105 to 1133 (QGNLSRRIKSAPPRDLGSSDKGQAALPRE).

This sequence belongs to the TCP10 family. In terms of assembly, forms homodimers. Associates with microtubules plus ends; binds to beta-tubulin subunits exposed on microtubule outer surface at its distal tip; also associates with microtubule lattice. Associated with the gamma-tubulin complex. Interacts with the head domain of EPB41. Interacts with LYST. Interacts with CEP152 (via C-terminus). Interacts with STIL. Forms a complex with STIL and SASS6. Post-translationally, phosphorylation at Ser-577 and Ser-583 by PLK2 is required for procentriole formation and centriole elongation. Phosphorylation by PLK2 oscillates during the cell cycle: it increases at G1/S transition and decreases during the exit from mitosis. Phosphorylation at Ser-583 is also mediated by PLK4 but is not a critical step in PLK4 function in procentriole assembly.

The protein localises to the cytoplasm. Its subcellular location is the cytoskeleton. It localises to the microtubule organizing center. The protein resides in the centrosome. It is found in the centriole. Its function is as follows. Plays an important role in cell division and centrosome function by participating in centriole duplication. Inhibits microtubule nucleation from the centrosome. Involved in the regulation of slow processive growth of centriolar microtubules. Acts as microtubule plus-end tracking protein that stabilizes centriolar microtubules and inhibits microtubule polymerization and extension from the distal ends of centrioles. Required for centriole elongation and for STIL-mediated centriole amplification. Required for the recruitment of CEP295 to the proximal end of new-born centrioles at the centriolar microtubule wall during early S phase in a PLK4-dependent manner. May be involved in the control of centriolar-microtubule growth by acting as a regulator of tubulin release. The protein is Centrosomal P4.1-associated protein (Cpap) of Mus musculus (Mouse).